A 102-amino-acid chain; its full sequence is Small ribosomal subunit protein uS10 (102 aa).

It belongs to the universal ribosomal protein uS10 family. Part of the 30S ribosomal subunit.

Its function is as follows. Involved in the binding of tRNA to the ribosomes. This is Small ribosomal subunit protein uS10 from Trichlorobacter lovleyi (strain ATCC BAA-1151 / DSM 17278 / SZ) (Geobacter lovleyi).